The following is a 277-amino-acid chain: Collectin-10 (277 aa).

An N-terminal signal peptide occupies residues methionine 1–glycine 27. The N-linked (GlcNAc...) asparagine glycan is linked to asparagine 11. Positions threonine 41–lysine 103 are disordered. Residues serine 45–lysine 103 form the Collagen-like domain. Positions lysine 49–valine 67 are enriched in basic and acidic residues. The region spanning threonine 155 to glutamate 271 is the C-type lectin domain. Intrachain disulfides connect cysteine 176–cysteine 270 and cysteine 248–cysteine 262. Asparagine 258 is a glycosylation site (N-linked (GlcNAc...) asparagine).

This sequence belongs to the COLEC10/COLEC11 family. In terms of tissue distribution, expressed mainly in the liver and stomach, but also in muscles, testes, and intestines.

It is found in the secreted. Its subcellular location is the golgi apparatus. The protein resides in the cytoplasm. Its function is as follows. Lectin that binds to various sugars: galactose &gt; mannose = fucose &gt; N-acetylglucosamine &gt; N-acetylgalactosamine. Acts as a chemoattractant, probably involved in the regulation of cell migration. This Mus musculus (Mouse) protein is Collectin-10 (Colec10).